We begin with the raw amino-acid sequence, 598 residues long: uncharacterized protein (598 aa).

An ABC transmembrane type-1 domain is found at 39–322 (LIMVFVFVTV…LSNQFNMIQM (284 aa)). Helical transmembrane passes span 40-60 (IMVF…PYLI), 80-100 (MLIL…QGKI), 150-170 (VLGN…GAVI), 177-197 (VILS…TQIV), and 273-293 (LGFA…IITV). An ABC transporter domain is found at 355–589 (IEFKNVWFSY…RGFYYELFTS (235 aa)). Residue 388–395 (GPTGSGKT) coordinates ATP.

Belongs to the ABC transporter superfamily.

Its subcellular location is the cell membrane. This is an uncharacterized protein from Thermotoga maritima (strain ATCC 43589 / DSM 3109 / JCM 10099 / NBRC 100826 / MSB8).